The chain runs to 229 residues: Urease accessory protein UreF (229 aa).

It belongs to the UreF family. UreD, UreF and UreG form a complex that acts as a GTP-hydrolysis-dependent molecular chaperone, activating the urease apoprotein by helping to assemble the nickel containing metallocenter of UreC. The UreE protein probably delivers the nickel.

The protein localises to the cytoplasm. Required for maturation of urease via the functional incorporation of the urease nickel metallocenter. This chain is Urease accessory protein UreF, found in Staphylococcus epidermidis (strain ATCC 12228 / FDA PCI 1200).